The sequence spans 1318 residues: Putative tetratricopeptide repeat protein 41 (1318 aa).

6 TPR repeats span residues 399 to 432 (TQLE…KPCI), 653 to 684 (WVQE…TPVE), 817 to 850 (CRLM…LVQS), 858 to 891 (LKVQ…MLRL), 991 to 1027 (MEFL…KENA), and 1045 to 1082 (SDTL…RVIH).

The protein localises to the cytoplasm. The sequence is that of Putative tetratricopeptide repeat protein 41 from Homo sapiens (Human).